A 749-amino-acid chain; its full sequence is Protein O-mannosyl-transferase 2 (749 aa).

Positions 1-30 are disordered; that stretch reads MAASVVKTPKCPRRGSAKEQQSKASPKSNN. The chain crosses the membrane as a helical span at residues 34-54; the sequence is NWHWWILLASVFLITFATRFY. N-linked (GlcNAc...) asparagine glycans are attached at residues Asn-78, Asn-104, and Asn-117. The next 5 helical transmembrane spans lie at 126–146, 173–193, 204–224, 226–246, and 266–286; these read YFCT…VYDL, ILLD…MVKI, SVRW…TISV, FVGL…LWLI, and IALI…HLSV. Asn-288 and Asn-312 each carry an N-linked (GlcNAc...) asparagine glycan. MIR domains lie at 316 to 372, 382 to 438, and 443 to 499; these read PRDV…IKPH, LQLL…VLIV, and NETV…VEDN. An N-linked (GlcNAc...) asparagine glycan is attached at Asn-443. 4 helical membrane passes run 572-592, 645-665, 669-689, and 703-723; these read IWWS…GNAI, LGAA…FWAM, LYFH…GVMF, and VLLG…SPLA. N-linked (GlcNAc...) asparagine glycosylation is present at Asn-735.

The protein belongs to the glycosyltransferase 39 family. In terms of assembly, interacts with Rt/POMT1.

It localises to the endoplasmic reticulum membrane. The catalysed reaction is a di-trans,poly-cis-dolichyl beta-D-mannosyl phosphate + L-seryl-[protein] = 3-O-(alpha-D-mannosyl)-L-seryl-[protein] + a di-trans,poly-cis-dolichyl phosphate + H(+). It carries out the reaction a di-trans,poly-cis-dolichyl beta-D-mannosyl phosphate + L-threonyl-[protein] = 3-O-(alpha-D-mannosyl)-L-threonyl-[protein] + a di-trans,poly-cis-dolichyl phosphate + H(+). The protein operates within protein modification; protein glycosylation. Functionally, rt/POMT1 and tw/POMT2 function as a protein O-mannosyltransferase in association with each other to generate and maintain normal muscle development. In Drosophila pseudoobscura pseudoobscura (Fruit fly), this protein is Protein O-mannosyl-transferase 2.